We begin with the raw amino-acid sequence, 838 residues long: MKVSRRAFIKQTAAAATASVAGVTLPAGAANLVTDKELTQLKWSKAPCRFCGTGCGVEVAVKDNRVVATQGDPKAEVNRGLNCVKGYFLSKIMYGKDRLTQPLLRMKNGKYDKNGEFTPVTWDRAFDEMAMQFKRVIKEKGPTAVGMFGSGQWTVFEGYAAVKLMKAGFRSNNLDPNARHCMASAVAGFMRTFGMDEPMGCYDDFEVADAFVLWGSNMAEMHPILWSRVTDRRLSAPKTKVAVLSTFTHRSFDLADIPIVFTPQADLAMLNYIANYIITNKKVNTDFVNKHTVFKQGVTDIGYGLRPDNPVQKAAKNADKVGDSKPISFDEFAKFVSTYDLDYTTKLANPDKSKEKEFKQQLQKLAELYADPKIKVVSFWTMGFNQHTRGTWANNMIYNLHLLTGKIATPGNSPFSLTGQPSACGTAREVGTFSHRLPADMVVTNPKHREEAEHIWKLPAGTIPEKPGYHAVLQNRMLKDGKLNAYWVQVNNNMQAGANINEEGYPGYRNPANFIVVSDVYPTVTALAADLILPSAMWVEKEGAYGNAERRTQFWHQLVDAPGEARSDLWQLVEFSKRFKVEEVWPEDLIAKKPELRGKTLYDVLYRNGNVDRFPLKDVDPEYNNAEAKAFGFYLQKGLFEEYASFGRGHGHDLAPFDDYHKARGLRWPVVNGKETRWRYKEGSDPYVKAGTGYQFYGNPDGKAVIFALPYEAPPEVPDKEYPFWLSTGRVLEHWHSGSMTRRVPELYRAFPNAVCFMHPEDANALGLRRGVEVEVISRRGKMRTRIETRGRNQPPKGLVFVPWFDASQLINKVTLDATCPISLQTDFKKCAVKIVKV.

A signal peptide (tat-type signal) is located at residues 1–29 (MKVSRRAFIKQTAAAATASVAGVTLPAGA). One can recognise a 4Fe-4S Mo/W bis-MGD-type domain in the interval 41–97 (LKWSKAPCRFCGTGCGVEVAVKDNRVVATQGDPKAEVNRGLNCVKGYFLSKIMYGKD). [4Fe-4S] cluster-binding residues include cysteine 48, cysteine 51, cysteine 55, and cysteine 83. Mo-bis(molybdopterin guanine dinucleotide)-binding positions include lysine 85, glutamine 152, asparagine 177, cysteine 181, 214 to 221 (WGSNMAEM), 245 to 249 (STFTH), methionine 382, glutamine 386, asparagine 492, 518 to 519 (SD), lysine 541, aspartate 568, and 728 to 737 (TGRVLEHWHS). A substrate-binding site is contributed by tryptophan 804. Mo-bis(molybdopterin guanine dinucleotide)-binding residues include asparagine 812 and lysine 829.

It belongs to the prokaryotic molybdopterin-containing oxidoreductase family. NasA/NapA/NarB subfamily. In terms of assembly, component of the periplasmic nitrate reductase NapAB complex composed of NapA and NapB. Requires [4Fe-4S] cluster as cofactor. The cofactor is Mo-bis(molybdopterin guanine dinucleotide). Predicted to be exported by the Tat system. The position of the signal peptide cleavage has not been experimentally proven.

Its subcellular location is the periplasm. It carries out the reaction 2 Fe(II)-[cytochrome] + nitrate + 2 H(+) = 2 Fe(III)-[cytochrome] + nitrite + H2O. Catalytic subunit of the periplasmic nitrate reductase complex NapAB. Receives electrons from NapB and catalyzes the reduction of nitrate to nitrite. The protein is Periplasmic nitrate reductase of Ralstonia pickettii (strain 12J).